The chain runs to 1387 residues: DNA-directed RNA polymerase subunit beta'' (1387 aa).

Positions 220, 291, 298, and 301 each coordinate Zn(2+).

Belongs to the RNA polymerase beta' chain family. RpoC2 subfamily. As to quaternary structure, in plastids the minimal PEP RNA polymerase catalytic core is composed of four subunits: alpha, beta, beta', and beta''. When a (nuclear-encoded) sigma factor is associated with the core the holoenzyme is formed, which can initiate transcription. Zn(2+) serves as cofactor.

Its subcellular location is the plastid. It localises to the chloroplast. It catalyses the reaction RNA(n) + a ribonucleoside 5'-triphosphate = RNA(n+1) + diphosphate. In terms of biological role, DNA-dependent RNA polymerase catalyzes the transcription of DNA into RNA using the four ribonucleoside triphosphates as substrates. This is DNA-directed RNA polymerase subunit beta'' from Carica papaya (Papaya).